The primary structure comprises 246 residues: MDNQQLPYAGQPAAAGAGAPVPGVPGAGGPPAVPHHHLLQQQQAQLQAFWAYQRQEAERASASDFKNHQLPLARIKKIMKADEDVRMISAEAPVLFAKACELFILELTIRSWLHAEENKRRTLQRNDVAAAIARTDVFDFLVDIVPREEAKEEPGSALGFAAGGPAGAVGAAGPAAGLPYYYPPMGQPAPMMPAWHVPAWDPAWQQGAAPDVDQGAAGSFSEEGQQGFAGHGGAAASFPPAPPSSE.

Disordered stretches follow at residues methionine 1–histidine 35 and glutamine 205–glutamate 246. A compositionally biased stretch (low complexity) spans alanine 9–valine 21.

The protein belongs to the NFYC/HAP5 subunit family. Heterotrimeric transcription factor composed of three components, NF-YA, NF-YB and NF-YC. NF-YB and NF-YC must interact and dimerize for NF-YA association and DNA binding. Interacts with NFYB8, NFYB10 and HD5/NFYB11.

The protein localises to the nucleus. It localises to the cytoplasm. Probable transcription factor involved in the regulation of flowering time under long day (LD) conditions. Functions as a repressor of flowering, independently of HD1 and GHD7. Controls flowering time by negatively regulating the expression of EHD1 and HD3A. Component of the NF-Y/HAP transcription factor complex. This chain is Nuclear transcription factor Y subunit C-2, found in Oryza sativa subsp. japonica (Rice).